A 116-amino-acid chain; its full sequence is Large ribosomal subunit protein uL18 (116 aa).

Belongs to the universal ribosomal protein uL18 family. Part of the 50S ribosomal subunit; part of the 5S rRNA/L5/L18/L25 subcomplex. Contacts the 5S and 23S rRNAs.

In terms of biological role, this is one of the proteins that bind and probably mediate the attachment of the 5S RNA into the large ribosomal subunit, where it forms part of the central protuberance. The protein is Large ribosomal subunit protein uL18 of Shewanella piezotolerans (strain WP3 / JCM 13877).